The primary structure comprises 79 residues: Serine protease inhibitor Kazal-type 1 (79 aa).

Positions 1–23 are cleaved as a signal peptide; sequence MKVTGIFLLSALALLSLSGNTGA. In terms of domain architecture, Kazal-like spans 26–79; sequence LGREAKCYNELNGCTKIYDPVCGTDGNTYPNECVLCFENRKRQTSILIQKSGPC. 3 disulfides stabilise this stretch: C32–C61, C39–C58, and C47–C79.

Its subcellular location is the secreted. Serine protease inhibitor which exhibits anti-trypsin activity. In the pancreas, protects against trypsin-catalyzed premature activation of zymogens. Its function is as follows. In the male reproductive tract, binds to sperm heads where it modulates sperm capacitance by inhibiting calcium uptake and nitrogen oxide (NO) production. The chain is Serine protease inhibitor Kazal-type 1 (SPINK1) from Homo sapiens (Human).